A 476-amino-acid polypeptide reads, in one-letter code: Inosine-5'-monophosphate dehydrogenase (476 aa).

CBS domains lie at 92–150 and 151–207; these read MIEN…IADV and MTKD…PNAS. NAD(+) is bound by residues Asp244 and 294–296; that span reads GVG. K(+) contacts are provided by Gly296 and Gly298. Residue Ser299 coordinates IMP. Cys301 lines the K(+) pocket. Cys301 (thioimidate intermediate) is an active-site residue. Residues 334–336, 357–358, 381–385, and Glu413 each bind IMP; these read DGG, GS, and YRGMA. K(+) is bound by residues Glu467 and Ser468.

This sequence belongs to the IMPDH/GMPR family. In terms of assembly, homotetramer. Requires K(+) as cofactor.

The catalysed reaction is IMP + NAD(+) + H2O = XMP + NADH + H(+). The protein operates within purine metabolism; XMP biosynthesis via de novo pathway; XMP from IMP: step 1/1. Its activity is regulated as follows. Mycophenolic acid (MPA) is a non-competitive inhibitor that prevents formation of the closed enzyme conformation by binding to the same site as the amobile flap. In contrast, mizoribine monophosphate (MZP) is a competitive inhibitor that induces the closed conformation. MPA is a potent inhibitor of mammalian IMPDHs but a poor inhibitor of the bacterial enzymes. MZP is a more potent inhibitor of bacterial IMPDH. Its function is as follows. Catalyzes the conversion of inosine 5'-phosphate (IMP) to xanthosine 5'-phosphate (XMP), the first committed and rate-limiting step in the de novo synthesis of guanine nucleotides, and therefore plays an important role in the regulation of cell growth. The sequence is that of Inosine-5'-monophosphate dehydrogenase from Nitrosopumilus maritimus (strain SCM1).